We begin with the raw amino-acid sequence, 335 residues long: uncharacterized protein (335 aa).

28–35 (GPINSGKT) is an ATP binding site.

The protein belongs to the archaeal ATPase family.

This is an uncharacterized protein from Pyrococcus abyssi (strain GE5 / Orsay).